The chain runs to 824 residues: Lysine-specific histone demethylase 1B homolog (824 aa).

Residues Met1–Val31 are disordered. The SWIRM domain maps to Pro245–Pro346. Residues Pro352–Ile407, Val579, Glu788, and Gln796–Met798 contribute to the FAD site.

It belongs to the flavin monoamine oxidase family. FAD serves as cofactor. In terms of tissue distribution, in hermaphrodites, expressed in gut cells, embryonic cells and sheath cells. Not expressed in sperm or pharyngeal neurons.

It is found in the nucleus. It catalyses the reaction N(6),N(6)-dimethyl-L-lysyl(4)-[histone H3] + 2 A + 2 H2O = L-lysyl(4)-[histone H3] + 2 formaldehyde + 2 AH2. Histone demethylase that demethylates di-methylated 'Lys-4' of histone H3, a specific tag for epigenetic transcriptional activation, thereby acting as a corepressor. Acts by oxidizing the substrate by FAD to generate the corresponding imine that is subsequently hydrolyzed. Plays a role in the mitotic development of the germline. May be involved in H3 demethylation in mitotic cells including gut and embryonic cells. Plays a role in sensitivity upon interstrand cross-link DNA damage, probably by positively regulating the expression of mlh-1. Plays a role in developmental growth and lifespan regulation in response to ultraviolet-induced damage. No obvious role in larval development, sex chromosome segregation or for regulating meiotic crossover frequency. This is Lysine-specific histone demethylase 1B homolog from Caenorhabditis elegans.